The chain runs to 151 residues: 3-dehydroquinate dehydratase (151 aa).

The active-site Proton acceptor is the Y24. Substrate is bound by residues N76, H82, and D89. H102 functions as the Proton donor in the catalytic mechanism. Substrate is bound by residues 103 to 104 (VS) and R113.

The protein belongs to the type-II 3-dehydroquinase family. In terms of assembly, homododecamer.

The enzyme catalyses 3-dehydroquinate = 3-dehydroshikimate + H2O. The protein operates within metabolic intermediate biosynthesis; chorismate biosynthesis; chorismate from D-erythrose 4-phosphate and phosphoenolpyruvate: step 3/7. Catalyzes a trans-dehydration via an enolate intermediate. This is 3-dehydroquinate dehydratase from Rhodopseudomonas palustris (strain BisA53).